A 262-amino-acid chain; its full sequence is MKTPFGKTPGQRSRADAGHAGVSANMMKKRTSHKKHRTSVGPSKPVSQPRRNIVGCRIQHGWREGNGPVTQWKGTVLDQVPVNPSLYLIKYDGFDCVYGLELNKDDRVSALEVLPDRVATSRISDAHLADTMIGKAVEHMFETEDGSKDEWRGMVLARAPVMNTWFYITYEKDPVLYMYQLLDDYKEGDLRIMPDSNDSPPAEREPGEVVDSLVGKQVEYAKEDGSKRTGMVIHQVEAKPSVYFIKFDDDFHIYVYDLVKTS.

Positions 1-49 (MKTPFGKTPGQRSRADAGHAGVSANMMKKRTSHKKHRTSVGPSKPVSQP) are disordered. Glycyl lysine isopeptide (Lys-Gly) (interchain with G-Cter in SUMO2) cross-links involve residues Lys7 and Lys28. Over residues 27–38 (MKKRTSHKKHRT) the composition is skewed to basic residues. Lys44 bears the N6-acetyllysine; alternate mark. Residue Lys44 forms a Glycyl lysine isopeptide (Lys-Gly) (interchain with G-Cter in SUMO2); alternate linkage. Positions 53–116 (IVGCRIQHGW…RVSALEVLPD (64 aa)) are tudor-like domain 1. The interval 93–98 (GFDCVY) is histone H3K4me3 and H3R8me2a binding. 2 positions are modified to phosphoserine; by AURKA: Ser109 and Ser124. The segment at 132–193 (MIGKAVEHMF…DYKEGDLRIM (62 aa)) is tudor-like domain 2. Residue Glu142 is a region of interest, histone H3K4me3 and H3R8me2a binding. Ser199 is subject to Phosphoserine. A tudor-like domain 3 region spans residues 213-262 (LVGKQVEYAKEDGSKRTGMVIHQVEAKPSVYFIKFDDDFHIYVYDLVKTS). The tract at residues 250-252 (DFH) is histone H3K4me3 and H3R8me2a binding.

Belongs to the SPIN/STSY family. As to quaternary structure, homodimer; may form higher-order oligomers. Interacts with TCF7L2/TCF4; the interaction is direct. Interacts with HABP4 and SERBP1. Interacts with SPINDOC; SPINDOC stabilizes SPIN1 and enhances its association with bivalent H3K4me3K9me3 mark. Interacts with SPOCD1; promoting recruitment of PIWIL4 and SPOCD1 to transposons. In terms of processing, phosphorylated during oocyte meiotic maturation.

It localises to the nucleus. The protein resides in the nucleolus. Its function is as follows. Chromatin reader that specifically recognizes and binds histone H3 both trimethylated at 'Lys-4' and 'Lys-9' (H3K4me3K9me3) and is involved in piRNA-mediated retrotransposon silencing during spermatogenesis. Plays a key role in the initiation of the PIWIL4-piRNA pathway, a pathway that directs transposon DNA methylation and silencing in the male embryonic germ cells, by promoting recruitment of DNA methylation machinery to transposons: binds young, but not old, LINE1 transposons, which are specifically marked with H3K4me3K9me3, and promotes the recruitment of PIWIL4 and SPOCD1 to transposons, leading to piRNA-directed DNA methylation. Also recognizes and binds histone H3 both trimethylated at 'Lys-4' and asymmetrically dimethylated at 'Arg-8' (H3K4me3 and H3R8me2a) and acts as an activator of Wnt signaling pathway downstream of PRMT2. Overexpression induces metaphase arrest and chromosomal instability. Overexpression induces metaphase arrest and chromosomal instability. Localizes to active rDNA loci and promotes the expression of rRNA genes. May play a role in cell-cycle regulation during the transition from gamete to embryo. Involved in oocyte meiotic resumption, a process that takes place before ovulation to resume meiosis of oocytes blocked in prophase I: may act by regulating maternal transcripts to control meiotic resumption. In Rattus norvegicus (Rat), this protein is Spindlin-1 (Spin1).